A 390-amino-acid chain; its full sequence is 1-deoxy-D-xylulose 5-phosphate reductoisomerase (390 aa).

Residues Thr10, Gly11, Ser12, Ile13, Gly36, Asn38, and Asn124 each contribute to the NADPH site. Lys125 serves as a coordination point for 1-deoxy-D-xylulose 5-phosphate. Glu126 provides a ligand contact to NADPH. Asp150 is a binding site for Mn(2+). The 1-deoxy-D-xylulose 5-phosphate site is built by Ser151, Glu152, Ser176, and His199. Glu152 is a Mn(2+) binding site. Gly205 is a binding site for NADPH. Ser212, Asn217, Lys218, and Glu221 together coordinate 1-deoxy-D-xylulose 5-phosphate. Residue Glu221 coordinates Mn(2+).

Belongs to the DXR family. It depends on Mg(2+) as a cofactor. Mn(2+) is required as a cofactor.

It catalyses the reaction 2-C-methyl-D-erythritol 4-phosphate + NADP(+) = 1-deoxy-D-xylulose 5-phosphate + NADPH + H(+). The protein operates within isoprenoid biosynthesis; isopentenyl diphosphate biosynthesis via DXP pathway; isopentenyl diphosphate from 1-deoxy-D-xylulose 5-phosphate: step 1/6. Its function is as follows. Catalyzes the NADPH-dependent rearrangement and reduction of 1-deoxy-D-xylulose-5-phosphate (DXP) to 2-C-methyl-D-erythritol 4-phosphate (MEP). This Microcystis aeruginosa (strain NIES-843 / IAM M-2473) protein is 1-deoxy-D-xylulose 5-phosphate reductoisomerase.